Reading from the N-terminus, the 168-residue chain is G/U mismatch-specific DNA glycosylase (168 aa).

The protein belongs to the uracil-DNA glycosylase (UDG) superfamily. TDG/mug family. Binds DNA as a monomer.

The protein resides in the cytoplasm. The catalysed reaction is Specifically hydrolyzes mismatched double-stranded DNA and polynucleotides, releasing free uracil.. Excises ethenocytosine and uracil, which can arise by alkylation or deamination of cytosine, respectively, from the corresponding mispairs with guanine in ds-DNA. It is capable of hydrolyzing the carbon-nitrogen bond between the sugar-phosphate backbone of the DNA and the mispaired base. The complementary strand guanine functions in substrate recognition. Required for DNA damage lesion repair in stationary-phase cells. The polypeptide is G/U mismatch-specific DNA glycosylase (Escherichia coli O139:H28 (strain E24377A / ETEC)).